The sequence spans 277 residues: Large ribosomal subunit protein uL2 (277 aa).

The tract at residues 222–277 is disordered; sequence GVAMNPVDHPHGGGEGRTSGGRHPVSPWGKPTKGKRTRSNKATDKFIMRTRHQRKK.

It belongs to the universal ribosomal protein uL2 family. Part of the 50S ribosomal subunit. Forms a bridge to the 30S subunit in the 70S ribosome.

One of the primary rRNA binding proteins. Required for association of the 30S and 50S subunits to form the 70S ribosome, for tRNA binding and peptide bond formation. It has been suggested to have peptidyltransferase activity; this is somewhat controversial. Makes several contacts with the 16S rRNA in the 70S ribosome. This is Large ribosomal subunit protein uL2 from Bartonella henselae (strain ATCC 49882 / DSM 28221 / CCUG 30454 / Houston 1) (Rochalimaea henselae).